The primary structure comprises 97 residues: Large ribosomal subunit protein bL28 (97 aa).

This sequence belongs to the bacterial ribosomal protein bL28 family.

The sequence is that of Large ribosomal subunit protein bL28 from Sphingopyxis alaskensis (strain DSM 13593 / LMG 18877 / RB2256) (Sphingomonas alaskensis).